The chain runs to 174 residues: Crossover junction endodeoxyribonuclease RuvC (174 aa).

Residues aspartate 8, glutamate 67, and aspartate 139 contribute to the active site. The Mg(2+) site is built by aspartate 8, glutamate 67, and aspartate 139.

It belongs to the RuvC family. As to quaternary structure, homodimer which binds Holliday junction (HJ) DNA. The HJ becomes 2-fold symmetrical on binding to RuvC with unstacked arms; it has a different conformation from HJ DNA in complex with RuvA. In the full resolvosome a probable DNA-RuvA(4)-RuvB(12)-RuvC(2) complex forms which resolves the HJ. Mg(2+) is required as a cofactor.

It is found in the cytoplasm. The enzyme catalyses Endonucleolytic cleavage at a junction such as a reciprocal single-stranded crossover between two homologous DNA duplexes (Holliday junction).. In terms of biological role, the RuvA-RuvB-RuvC complex processes Holliday junction (HJ) DNA during genetic recombination and DNA repair. Endonuclease that resolves HJ intermediates. Cleaves cruciform DNA by making single-stranded nicks across the HJ at symmetrical positions within the homologous arms, yielding a 5'-phosphate and a 3'-hydroxyl group; requires a central core of homology in the junction. The consensus cleavage sequence is 5'-(A/T)TT(C/G)-3'. Cleavage occurs on the 3'-side of the TT dinucleotide at the point of strand exchange. HJ branch migration catalyzed by RuvA-RuvB allows RuvC to scan DNA until it finds its consensus sequence, where it cleaves and resolves the cruciform DNA. The protein is Crossover junction endodeoxyribonuclease RuvC of Pseudomonas fluorescens (strain SBW25).